The primary structure comprises 161 residues: Phosphopantetheine adenylyltransferase (161 aa).

A substrate-binding site is contributed by Ser-11. ATP-binding positions include 11 to 12 (SF) and His-19. Lys-43, Leu-75, and Arg-89 together coordinate substrate. ATP-binding positions include 90 to 92 (GLR), Glu-100, and 125 to 131 (YSFISSS).

This sequence belongs to the bacterial CoaD family. As to quaternary structure, homohexamer. It depends on Mg(2+) as a cofactor.

It localises to the cytoplasm. The enzyme catalyses (R)-4'-phosphopantetheine + ATP + H(+) = 3'-dephospho-CoA + diphosphate. It participates in cofactor biosynthesis; coenzyme A biosynthesis; CoA from (R)-pantothenate: step 4/5. Reversibly transfers an adenylyl group from ATP to 4'-phosphopantetheine, yielding dephospho-CoA (dPCoA) and pyrophosphate. The polypeptide is Phosphopantetheine adenylyltransferase (Staphylococcus saprophyticus subsp. saprophyticus (strain ATCC 15305 / DSM 20229 / NCIMB 8711 / NCTC 7292 / S-41)).